A 551-amino-acid chain; its full sequence is MSFDGFFLHHIVEELRSELVNGRIQKINQPFEQELVLQIRSNRQSHRLLLSAHPVFGRIQLTQTTFENPAQPSTFIMVLRKYLQGALIESIEQVENDRIVEMTVSNKNEIGDHIQATLIIEIMGKHSNILLVDKSSHKILEVIKHVGFSQNSYRTLLPGSTYIAPPSTESLNPFTIKDEKLFEILQTQELTAKNLQSLFQGLGRDTANELERILVSEKLSAFRNFFNQETKPCLTETSFSPVPFANQAGEPFANLSDLLDTYYKNKAERDRVKQQASELIRRVENELQKNRHKLKKQERELLATDNAEEFRQKGELLTTFLHQVPNDQDQVILDNYYTNQPIMIALDKALTPNQNAQRYFKRYQKLKEAVKYLTDLIEETKATILYLESVETVLNQAGLEEIAEIREELIQTGFIRRRQREKIQKRKKLEQYLASDGKTIIYVGRNNLQNEELTFKMARKEELWFHAKDIPGSHVVISGNLDPSDAVKTDAAELAAYFSQGRLSNLVQVDMIEVKKLNKPTGGKPGFVTYTGQKTLRVTPDSKKIASMKKS.

Positions 363-551 (YQKLKEAVKY…SKKIASMKKS (189 aa)) are required for fibronectin binding.

Belongs to the NEMF family. Associates with stalled 50S ribosomal subunits, binds to RqcP. Interacts with human fibronectin.

It is found in the cell surface. Its subcellular location is the cytoplasm. Its function is as follows. Key component of the ribosome quality control system (RQC), a ribosome-associated complex that mediates the extraction of incompletely synthesized nascent chains from stalled ribosomes and their subsequent degradation. RqcH recruits Ala-charged tRNA, and with RqcP directs the elongation of stalled nascent chains on 50S ribosomal subunits, leading to non-templated C-terminal alanine extensions (Ala tail). The Ala tail promotes nascent chain degradation. May add between 1 and at least 8 Ala residues. Binds to stalled 50S ribosomal subunits. Recombinant protein binds to immobilized human fibronectin; binding is saturable and competed by heparin. Recombinant protein inhibits binding of whole cells to fibronectin. This is Rqc2 homolog RqcH from Streptococcus pneumoniae (strain ATCC BAA-255 / R6).